A 601-amino-acid polypeptide reads, in one-letter code: Alpha-terpineol synthase, chloroplastic (601 aa).

Residues 1–47 constitute a chloroplast transit peptide; the sequence is MSTISIHHVGILRNPLHSKSKRASINKPWSLSLPRSSSASRLVEPCR. The Mn(2+) site is built by Asp357 and Asp361. The short motif at 357–361 is the DDXXD motif element; that stretch reads DDVYD. Homodimerization regions lie at residues 363–369 and 435–471; these read YGTLDEL and EAEW…ELSL. Positions 499 and 507 each coordinate Mn(2+).

This sequence belongs to the terpene synthase family. Homodimer. The cofactor is Mn(2+). It depends on Mg(2+) as a cofactor.

It is found in the plastid. The protein resides in the chloroplast. The enzyme catalyses (2E)-geranyl diphosphate + H2O = (S)-alpha-terpineol + diphosphate. It catalyses the reaction (2E)-geranyl diphosphate + H2O = (R)-alpha-terpineol + diphosphate. Its pathway is secondary metabolite biosynthesis; terpenoid biosynthesis. Functionally, involved in the biosynthesis of phenolic monoterpenes natural products. Monoterpene synthase which catalyzes the conversion of geranyl diphosphate (GPP) to alpha-terpineol (isomer is not determined). The polypeptide is Alpha-terpineol synthase, chloroplastic (Thymus caespititius (Cretan thyme)).